We begin with the raw amino-acid sequence, 254 residues long: GPI alpha-1,4-mannosyltransferase I, stabilizing subunit (254 aa).

Residues 1–22 (MAAGAVAWLLLWAAWLVGRLAA) form the signal peptide. Over 23 to 226 (DFSDAPFSAG…PVGLTIHTSL (204 aa)) the chain is Lumenal. N-linked (GlcNAc...) asparagine glycosylation is present at Asn211. A helical membrane pass occupies residues 227–247 (VCSVTLLITILCSTLILLAVF). Over 248 to 254 (KYGHFSL) the chain is Cytoplasmic.

The protein belongs to the PIGX family. Part of the glycosylphosphatidylinositol-mannosyltransferase I complex that is composed of PIGM and PIGX. Interacts with PIGM; PIGX stabilizes PIGM.

It is found in the endoplasmic reticulum membrane. It functions in the pathway glycolipid biosynthesis; glycosylphosphatidylinositol-anchor biosynthesis. Functionally, stabilizing subunit of the glycosylphosphatidylinositol-mannosyltransferase I complex which catalyzes the transfer of the first mannose, via an alpha-1,4 bond from a dolichol-phosphate-mannose (Dol-P-Man) to the glucosaminyl acyl phosphatidylinositol (GlcN-(acyl)PI) intermediate to generate alpha-D-Man-(1-&gt;4)-alpha-D-GlcN-(1-&gt;6)-(1-radyl,2-acyl-sn-glycero-3-phospho)-2-acyl-inositol and participates in the sixth step of the glycosylphosphatidylinositol-anchor biosynthesis. Probably acts by stabilizing the mannosyltransferase PIGM. The chain is GPI alpha-1,4-mannosyltransferase I, stabilizing subunit from Mus musculus (Mouse).